The primary structure comprises 132 residues: MLTAAVLSCALLLALPATRGAQMGLAPMEGIRRPDQALLPELPGLGLRAPLKKTTAEQAEEDLLQEAQALAEVLDLQDREPRSSRRCVRLHESCLGQQVPCCDPCATCYCRFFNAFCYCRKLGTAMNPCSRT.

A signal peptide spans 1–20 (MLTAAVLSCALLLALPATRG). The propeptide occupies 21–82 (AQMGLAPMEG…VLDLQDREPR (62 aa)). Disulfide bonds link C87/C102, C94/C108, C101/C119, C105/C129, and C110/C117. The region spanning 87 to 129 (CVRLHESCLGQQVPCCDPCATCYCRFFNAFCYCRKLGTAMNPC) is the Agouti domain. The interval 111-113 (RFF) is interaction with melanocortin receptors.

In terms of assembly, interacts with melanocortin receptors MC3R, MC4R and MC5R. In terms of tissue distribution, expressed primarily in the adrenal gland, subthalamic nucleus, and hypothalamus, with a lower level of expression occurring in testis, lung, and kidney.

It is found in the secreted. The protein resides in the golgi apparatus lumen. Functionally, plays a role in weight homeostasis. Involved in the control of feeding behavior through the central melanocortin system. Acts as alpha melanocyte-stimulating hormone antagonist by inhibiting cAMP production mediated by stimulation of melanocortin receptors within the hypothalamus and adrenal gland. Has very low activity with MC5R. Is an inverse agonist for MC3R and MC4R being able to suppress their constitutive activity. It promotes MC3R and MC4R endocytosis in an arrestin-dependent manner. This Homo sapiens (Human) protein is Agouti-related protein (AGRP).